Reading from the N-terminus, the 135-residue chain is Small ribosomal subunit protein uS9 (135 aa).

Positions 108 to 118 are enriched in basic and acidic residues; it reads VGDPRRTEPHK. The segment at 108-135 is disordered; it reads VGDPRRTEPHKPNRSTKGPRAKRQKSYR. Residues 119–135 are compositionally biased toward basic residues; it reads PNRSTKGPRAKRQKSYR.

It belongs to the universal ribosomal protein uS9 family.

The sequence is that of Small ribosomal subunit protein uS9 (rps9) from Pyrococcus horikoshii (strain ATCC 700860 / DSM 12428 / JCM 9974 / NBRC 100139 / OT-3).